A 566-amino-acid chain; its full sequence is Malate synthase, glyoxysomal (566 aa).

The Proton acceptor role is filled by Arg-179. Residue Asp-465 is the Proton donor of the active site. The Microbody targeting signal signature appears at 564–566 (SRL).

It belongs to the malate synthase family.

It localises to the glyoxysome. The catalysed reaction is glyoxylate + acetyl-CoA + H2O = (S)-malate + CoA + H(+). The protein operates within carbohydrate metabolism; glyoxylate cycle; (S)-malate from isocitrate: step 2/2. This is Malate synthase, glyoxysomal (MLS) from Raphanus sativus (Radish).